Consider the following 205-residue polypeptide: Large ribosomal subunit protein uL4 (205 aa).

The protein belongs to the universal ribosomal protein uL4 family. Part of the 50S ribosomal subunit.

In terms of biological role, one of the primary rRNA binding proteins, this protein initially binds near the 5'-end of the 23S rRNA. It is important during the early stages of 50S assembly. It makes multiple contacts with different domains of the 23S rRNA in the assembled 50S subunit and ribosome. Forms part of the polypeptide exit tunnel. This Thermus thermophilus (strain ATCC BAA-163 / DSM 7039 / HB27) protein is Large ribosomal subunit protein uL4.